The following is a 432-amino-acid chain: Bifunctional IPC transferase and DIPP synthase (432 aa).

Residues 3 to 225 (PERAVILAAG…RARRMLVRTA (223 aa)) are mobA-like NTP transferase. CTP is bound by residues 9 to 11 (LAA), Lys-22, and Glu-113. Glu-113 serves as a coordination point for Mg(2+). Positions 226–426 (VKGTGDGFVS…LTLYFVVKKV (201 aa)) are CDP-alcohol phosphatidyltransferases. 3 helical membrane-spanning segments follow: residues 264-284 (FLLG…AGIL), 337-356 (IWYF…SYST), and 385-405 (VFLT…ALFL).

It in the N-terminal section; belongs to the MobA family. This sequence in the C-terminal section; belongs to the CDP-alcohol phosphatidyltransferase class-I family. Mg(2+) is required as a cofactor.

It is found in the membrane. The catalysed reaction is 1D-myo-inositol 3-phosphate + CTP + H(+) = CDP-1L-myo-inositol + diphosphate. It carries out the reaction CDP-1L-myo-inositol + 1D-myo-inositol 3-phosphate = bis(1L-myo-inositol) 3,1'-phosphate 1-phosphate + CMP + H(+). Functionally, involved in biosynthesis of di-myo-inositol phosphate (DIP), a widespread organic solute in microorganisms adapted to hot environments. Catalyzes the condensation of CTP and L-myo-inositol-1-phosphate into CDP-L-myo-inositol, as well as the biosynthesis of di-myo-inositol-1,3'-phosphate-1'-phosphate (DIPP) from CDP-L-myo-inositol and L-myo-inositol-1-phosphate. This chain is Bifunctional IPC transferase and DIPP synthase, found in Thermococcus kodakarensis (strain ATCC BAA-918 / JCM 12380 / KOD1) (Pyrococcus kodakaraensis (strain KOD1)).